Here is a 95-residue protein sequence, read N- to C-terminus: Protein TusB (95 aa).

Belongs to the DsrH/TusB family. As to quaternary structure, heterohexamer, formed by a dimer of trimers. The hexameric TusBCD complex contains 2 copies each of TusB, TusC and TusD. The TusBCD complex interacts with TusE.

It is found in the cytoplasm. Its function is as follows. Part of a sulfur-relay system required for 2-thiolation of 5-methylaminomethyl-2-thiouridine (mnm(5)s(2)U) at tRNA wobble positions. In Escherichia coli O157:H7, this protein is Protein TusB.